We begin with the raw amino-acid sequence, 379 residues long: Putative phosphatidate phosphatase (379 aa).

The segment at 1–53 (MPAVKIIMSTETSASETTPLRRSENETPDHKELAQSNSNSRQTTVNSNNNNYS) is disordered. Positions 9–18 (STETSASETT) are enriched in polar residues. Residues 19–33 (PLRRSENETPDHKEL) are compositionally biased toward basic and acidic residues. Over residues 35-53 (QSNSNSRQTTVNSNNNNYS) the composition is skewed to low complexity. Asn51 is a glycosylation site (N-linked (GlcNAc...) asparagine). The next 2 helical transmembrane spans lie at 90 to 110 (VGLD…FFLL) and 138 to 158 (MLYF…EVII). An N-linked (GlcNAc...) asparagine glycan is attached at Asn169. 2 consecutive transmembrane segments (helical) span residues 266–286 (SFPS…ALYL) and 330–350 (AGSL…SDLF).

This sequence belongs to the PA-phosphatase related phosphoesterase family. As to quaternary structure, homodimer. This complex seems not to be involved in substrate recognition, it may confer only structural or functional stability. Expressed in embryonic gut in a pattern that guides germ cells towards mesoderm (initially in hindgut and then on lower side of gut). During extended germ band stage, expressed in ectoderm as a medial band throughout the trunk.

Its subcellular location is the membrane. The enzyme catalyses a 1,2-diacyl-sn-glycero-3-phosphate + H2O = a 1,2-diacyl-sn-glycerol + phosphate. In terms of biological role, responsible for guiding the germ cells early in the process of migration from the lumen of the developing gut towards the overlying mesoderm, where the germ cells enter the gonads. May be involved in lipid metabolism. The sequence is that of Putative phosphatidate phosphatase (wun) from Drosophila melanogaster (Fruit fly).